The primary structure comprises 181 residues: Ribulose bisphosphate carboxylase small subunit 3B, chloroplastic (181 aa).

The N-terminal 54 residues, 1–54 (MASSMLSSAAVVTSPAQATMVAPFTGLKSSAAFPVTRKTNKDITSIASNGGRVS), are a transit peptide targeting the chloroplast.

This sequence belongs to the RuBisCO small chain family. In terms of assembly, heterohexadecamer of 8 large and 8 small subunits.

It localises to the plastid. Its subcellular location is the chloroplast. In terms of biological role, ruBisCO catalyzes two reactions: the carboxylation of D-ribulose 1,5-bisphosphate, the primary event in carbon dioxide fixation, as well as the oxidative fragmentation of the pentose substrate. Both reactions occur simultaneously and in competition at the same active site. Although the small subunit is not catalytic it is essential for maximal activity. The sequence is that of Ribulose bisphosphate carboxylase small subunit 3B, chloroplastic (RBCS-3B) from Arabidopsis thaliana (Mouse-ear cress).